Reading from the N-terminus, the 251-residue chain is Imidazole glycerol phosphate synthase subunit HisF (251 aa).

Active-site residues include aspartate 11 and aspartate 130.

Belongs to the HisA/HisF family. As to quaternary structure, heterodimer of HisH and HisF.

It localises to the cytoplasm. It catalyses the reaction 5-[(5-phospho-1-deoxy-D-ribulos-1-ylimino)methylamino]-1-(5-phospho-beta-D-ribosyl)imidazole-4-carboxamide + L-glutamine = D-erythro-1-(imidazol-4-yl)glycerol 3-phosphate + 5-amino-1-(5-phospho-beta-D-ribosyl)imidazole-4-carboxamide + L-glutamate + H(+). It participates in amino-acid biosynthesis; L-histidine biosynthesis; L-histidine from 5-phospho-alpha-D-ribose 1-diphosphate: step 5/9. Its function is as follows. IGPS catalyzes the conversion of PRFAR and glutamine to IGP, AICAR and glutamate. The HisF subunit catalyzes the cyclization activity that produces IGP and AICAR from PRFAR using the ammonia provided by the HisH subunit. This is Imidazole glycerol phosphate synthase subunit HisF from Chlorobaculum parvum (strain DSM 263 / NCIMB 8327) (Chlorobium vibrioforme subsp. thiosulfatophilum).